Here is a 786-residue protein sequence, read N- to C-terminus: E3 ubiquitin-protein ligase pub3 (786 aa).

Residues 1–109 (MEQGAKRVRF…RSNREVSLTR (109 aa)) form the C2 domain. Disordered regions lie at residues 134-225 (IRAP…NSNA) and 263-306 (TWTR…DSGN). The span at 142–193 (SSTTANRTTSTPTTTTARTTRTTPRPTATTNTSNQSTSNSTRNGTSAATSNG) shows a compositional bias: low complexity. Over residues 204–213 (HRSSPVTNRQ) the composition is skewed to polar residues. The segment covering 214-225 (TNNTSALSNSNA) has biased composition (low complexity). The WW 1 domain maps to 236-269 (GRLPPGWERRADSLGRTYYVDHNTRTTTWTRPAS). 2 stretches are compositionally biased toward polar residues: residues 263–285 (TWTR…QRLN) and 295–305 (SNPSLMQSDSG). WW domains are found at residues 306-339 (NDLP…DPRN) and 364-397 (GPLP…DPRL). Residues 453-786 (SAHDLKKRLM…VENTVGFGNE (334 aa)) form the HECT domain. Residue Cys-754 is the Glycyl thioester intermediate of the active site.

The enzyme catalyses S-ubiquitinyl-[E2 ubiquitin-conjugating enzyme]-L-cysteine + [acceptor protein]-L-lysine = [E2 ubiquitin-conjugating enzyme]-L-cysteine + N(6)-ubiquitinyl-[acceptor protein]-L-lysine.. Its pathway is protein modification; protein ubiquitination. In terms of biological role, E3 ubiquitin-protein ligase which accepts ubiquitin from an E2 ubiquitin-conjugating enzyme in the form of a thioester and then directly transfers the ubiquitin to targeted substrates. The sequence is that of E3 ubiquitin-protein ligase pub3 (pub3) from Schizosaccharomyces pombe (strain 972 / ATCC 24843) (Fission yeast).